Reading from the N-terminus, the 113-residue chain is Single-stranded DNA-binding protein B (113 aa).

The region spanning 1–104 is the SSB domain; sequence MFNQVMLVGR…VLADTVRFMD (104 aa). Position 82 is a phosphotyrosine (tyrosine 82).

In terms of assembly, homotetramer. In terms of processing, phosphorylated by YwqD, which increases ssDNA affinity; dephosphorylated by YwqE.

It is found in the cytoplasm. Not essential for replication of the chromosome, but is required for optimal competence. Binds ssDNA, binding is facilitated by DprA, acts as an accessory factor for homologous DNA strand exchange. The chain is Single-stranded DNA-binding protein B (ssbB) from Bacillus subtilis (strain 168).